Consider the following 306-residue polypeptide: Glutaminase (306 aa).

The substrate site is built by S62, N114, E159, N166, Y190, Y242, and V260.

It belongs to the glutaminase family. Homotetramer.

The enzyme catalyses L-glutamine + H2O = L-glutamate + NH4(+). The polypeptide is Glutaminase (Clostridium tetani (strain Massachusetts / E88)).